Consider the following 39-residue polypeptide: Photosystem II reaction center protein L (39 aa).

Residues 18–38 (SLYLGLLVVFTTGILFSSYFF) traverse the membrane as a helical segment.

It belongs to the PsbL family. As to quaternary structure, PSII is composed of 1 copy each of membrane proteins PsbA, PsbB, PsbC, PsbD, PsbE, PsbF, PsbH, PsbI, PsbJ, PsbK, PsbL, PsbM, PsbT, PsbX, PsbY, PsbZ, Psb30/Ycf12, peripheral proteins PsbO, CyanoQ (PsbQ), PsbU, PsbV and a large number of cofactors. It forms dimeric complexes.

The protein resides in the cellular thylakoid membrane. Functionally, one of the components of the core complex of photosystem II (PSII). PSII is a light-driven water:plastoquinone oxidoreductase that uses light energy to abstract electrons from H(2)O, generating O(2) and a proton gradient subsequently used for ATP formation. It consists of a core antenna complex that captures photons, and an electron transfer chain that converts photonic excitation into a charge separation. This subunit is found at the monomer-monomer interface and is required for correct PSII assembly and/or dimerization. In Synechococcus sp. (strain WH7803), this protein is Photosystem II reaction center protein L.